A 294-amino-acid chain; its full sequence is N-acetylmuramic acid 6-phosphate etherase (294 aa).

An SIS domain is found at 54-217; the sequence is VIQSFEEEGR…STASMIGVGK (164 aa). The active-site Proton donor is the E82. The active site involves E113.

The protein belongs to the GCKR-like family. MurNAc-6-P etherase subfamily. Homodimer.

It catalyses the reaction N-acetyl-D-muramate 6-phosphate + H2O = N-acetyl-D-glucosamine 6-phosphate + (R)-lactate. Its pathway is amino-sugar metabolism; N-acetylmuramate degradation. Specifically catalyzes the cleavage of the D-lactyl ether substituent of MurNAc 6-phosphate, producing GlcNAc 6-phosphate and D-lactate. The protein is N-acetylmuramic acid 6-phosphate etherase of Bacillus cereus (strain AH820).